The primary structure comprises 207 residues: Protein dct-5 (207 aa).

The helical transmembrane segment at 13–33 threads the bilayer; sequence LNFILSIMNSYLFVLIVSIGF.

The protein resides in the membrane. Acts downstream of daf-16/foxo to suppress tumors induced by disruption of gld-1. Potentially a direct target of daf-15/foxo. The polypeptide is Protein dct-5 (dct-5) (Caenorhabditis elegans).